A 231-amino-acid chain; its full sequence is Lytic polysaccharide monooxygenase-like protein X325 (231 aa).

The signal sequence occupies residues 1-17 (MRLSLLVTLALTALIEA). His18 provides a ligand contact to Cu(2+). N-linked (GlcNAc...) asparagine glycans are attached at residues Asn34, Asn55, Asn98, Asn133, Asn174, and Asn180. 2 cysteine pairs are disulfide-bonded: Cys47/Cys157 and Cys122/Cys178. The GPI-anchor amidated isoleucine moiety is linked to residue Ile202. Residues 203–231 (ASTTTGSAPRYYSWAGWLPLVAGAIWMAL) constitute a propeptide, removed in mature form.

Belongs to the X325 family. Cu(2+) is required as a cofactor.

The protein resides in the cell membrane. Lytic polysaccharide monooxygenase-like protein that has diverged to biological functions other than polysaccharide degradation since it does not perform oxidative cleavage of polysaccharides. Acts as a cell surface-bound protein that functions in the copper-accumulation pathway. May also act as the major cell wall sensor that regulates MAP kinase-dependent hyphal anastomosis, the fusion of hyphal cells. This is Lytic polysaccharide monooxygenase-like protein X325 from Hypocrea jecorina (strain QM6a) (Trichoderma reesei).